The sequence spans 26 residues: Conotoxin Eb6.17 (26 aa).

Disulfide bonds link C7-C18 and C13-C25.

Belongs to the conotoxin O1 superfamily. In terms of tissue distribution, expressed by the venom duct.

It localises to the secreted. In Conus ebraeus (Hebrew cone), this protein is Conotoxin Eb6.17 (E1).